An 802-amino-acid chain; its full sequence is Chondroitin sulfate synthase 1 (802 aa).

Residues 1-7 (MAARGRR) lie on the Cytoplasmic side of the membrane. The helical; Signal-anchor for type II membrane protein transmembrane segment at 8–28 (AWLSVLLGLVLGFVLASRLVL) threads the bilayer. Topologically, residues 29 to 802 (PRASELKRAG…SNNNGSVRTA (774 aa)) are lumenal. Residues 34–82 (LKRAGPRRRASPEGCRSGQAAASQAGGARGDARGAQLWPPGSDPDGGPR) form a disordered region. 2 stretches are compositionally biased toward low complexity: residues 49 to 59 (RSGQAAASQAG) and 66 to 78 (RGAQ…SDPD). 2 N-linked (GlcNAc...) asparagine glycosylation sites follow: Asn189 and Asn623. Residues Asp633 and His747 each coordinate a divalent metal cation. A glycan (N-linked (GlcNAc...) asparagine) is linked at Asn796.

It belongs to the chondroitin N-acetylgalactosaminyltransferase family. The cofactor is Co(2+). Requires Mn(2+) as cofactor. Cd(2+) serves as cofactor. Ubiquitous, with the highest levels in placenta. Detected at low levels in brain, heart, skeletal muscle, colon, thymus, spleen, kidney, liver, adrenal gland, mammary gland, stomach, small intestine, lung and peripheral blood leukocytes.

The protein localises to the golgi apparatus. The protein resides in the golgi stack membrane. It is found in the secreted. It catalyses the reaction 3-O-(beta-D-GlcA-(1-&gt;3)-beta-D-GalNAc-(1-&gt;4)-beta-D-GlcA-(1-&gt;3)-beta-D-Gal-(1-&gt;3)-beta-D-Gal-(1-&gt;4)-beta-D-Xyl)-L-seryl-[protein] + UDP-N-acetyl-alpha-D-galactosamine = 3-O-(beta-D-GalNAc-(1-&gt;4)-beta-D-GlcA-(1-&gt;3)-beta-D-GalNAc-(1-&gt;4)-beta-D-GlcA-(1-&gt;3)-beta-D-Gal-(1-&gt;3)-beta-D-Gal-(1-&gt;4)-beta-D-Xyl)-L-seryl-[protein] + UDP + H(+). The catalysed reaction is 3-O-{beta-D-GlcA-(1-&gt;3)-[beta-D-GalNAc-(1-&gt;4)-beta-D-GlcA-(1-&gt;3)](n)-beta-D-GalNAc-(1-&gt;4)-beta-D-GlcA-(1-&gt;3)-beta-D-Gal-(1-&gt;3)-beta-D-Gal-(1-&gt;4)-beta-D-Xyl}-L-seryl-[protein] + UDP-N-acetyl-alpha-D-galactosamine = 3-O-{[beta-D-GalNAc-(1-&gt;4)-beta-D-GlcA-(1-&gt;3)](n+1)-beta-D-GalNAc-(1-&gt;4)-beta-D-GlcA-(1-&gt;3)-beta-D-Gal-(1-&gt;3)-beta-D-Gal-(1-&gt;4)-beta-D-Xyl}-L-seryl-[protein] + UDP + H(+). The enzyme catalyses 3-O-(beta-D-GalNAc-(1-&gt;4)-beta-D-GlcA-(1-&gt;3)-beta-D-Gal-(1-&gt;3)-beta-D-Gal-(1-&gt;4)-beta-D-Xyl)-L-seryl-[protein] + UDP-alpha-D-glucuronate = 3-O-(beta-D-GlcA-(1-&gt;3)-beta-D-GalNAc-(1-&gt;4)-beta-D-GlcA-(1-&gt;3)-beta-D-Gal-(1-&gt;3)-beta-D-Gal-(1-&gt;4)-beta-D-Xyl)-L-seryl-[protein] + UDP + H(+). It carries out the reaction 3-O-{[beta-D-GalNAc-(1-&gt;4)-beta-D-GlcA-(1-&gt;3)](n)-beta-D-GalNAc-(1-&gt;4)-beta-D-GlcA-(1-&gt;3)-beta-D-Gal-(1-&gt;3)-beta-D-Gal-(1-&gt;4)-beta-D-Xyl}-L-seryl-[protein] + UDP-alpha-D-glucuronate = 3-O-{beta-D-GlcA-(1-&gt;3)-[beta-D-GalNAc-(1-&gt;4)-beta-D-GlcA-(1-&gt;3)](n)-beta-D-GalNAc-(1-&gt;4)-beta-D-GlcA-(1-&gt;3)-beta-D-Gal-(1-&gt;3)-beta-D-Gal-(1-&gt;4)-beta-D-Xyl}-L-seryl-[protein] + UDP + H(+). Its function is as follows. Has both beta-1,3-glucuronic acid and beta-1,4-N-acetylgalactosamine transferase activity. Transfers glucuronic acid (GlcUA) from UDP-GlcUA and N-acetylgalactosamine (GalNAc) from UDP-GalNAc to the non-reducing end of the elongating chondroitin polymer. Involved in the negative control of osteogenesis likely through the modulation of NOTCH signaling. In Homo sapiens (Human), this protein is Chondroitin sulfate synthase 1.